The following is a 604-amino-acid chain: ATP-dependent RNA helicase DBP1 (604 aa).

The segment at 1–79 (MSDGSGRYVP…RASGSGGFGG (79 aa)) is disordered. Residues 32–45 (SRYSGNGFFSSPNR) are compositionally biased toward polar residues. A Q motif motif is present at residues 138–166 (TEFKSPPLDELLLENVELANFSKPTPVQK). One can recognise a Helicase ATP-binding domain in the interval 169–358 (IPIVTKNRDL…RDFLKDYIFL (190 aa)). 182 to 189 (AQTGSGKT) contacts ATP. A DEAD box motif is present at residues 302 to 305 (DEAD). The Helicase C-terminal domain maps to 386–529 (LLDILINEID…EVPQFLVNMV (144 aa)). Residues 535-591 (FGRGGRNSRTGSNRGRGSNTRDYRHSNKDDWGSLGSSRRGFRSNDNRGFGNNWGSSS) form a disordered region. Residues 541–552 (NSRTGSNRGRGS) show a composition bias toward low complexity. Over residues 553–565 (NTRDYRHSNKDDW) the composition is skewed to basic and acidic residues.

This sequence belongs to the DEAD box helicase family. DDX3/DED1 subfamily.

Its subcellular location is the cytoplasm. The catalysed reaction is ATP + H2O = ADP + phosphate + H(+). Its function is as follows. ATP-binding RNA helicase involved in translation initiation. Remodels RNA in response to ADP and ATP concentrations by facilitating disruption, but also formation of RNA duplexes. Redundant to DED1, may be required in conditions in which DED1 expression is decreased. This is ATP-dependent RNA helicase DBP1 (DBP1) from Candida glabrata (strain ATCC 2001 / BCRC 20586 / JCM 3761 / NBRC 0622 / NRRL Y-65 / CBS 138) (Yeast).